We begin with the raw amino-acid sequence, 183 residues long: MGDQKFQRKKYSTPRHPWEKDRIDAERQLLIKYGLKNKRELWRAQTILTNFRTQARTLQAKLRYNDPLAIKQFQLLIGKLSRLNLLGENATLDDVLSLNIEDILERRLETLVYKKNLALTMKQARQFITHGHIKVNDRVVTIPSFMVEKSMEDSITYNETSPFTDENHPLRMEMSGTKEEENE.

The 63-residue stretch at 106-168 folds into the S4 RNA-binding domain; it reads RRLETLVYKK…ETSPFTDENH (63 aa). The tract at residues 158–183 is disordered; that stretch reads NETSPFTDENHPLRMEMSGTKEEENE. Residues 165–183 are compositionally biased toward basic and acidic residues; that stretch reads DENHPLRMEMSGTKEEENE.

Belongs to the universal ribosomal protein uS4 family. As to quaternary structure, part of the 30S ribosomal subunit. Contacts protein S5. The interaction surface between S4 and S5 is involved in control of translational fidelity.

In terms of biological role, one of the primary rRNA binding proteins, it binds directly to 16S rRNA where it nucleates assembly of the body of the 30S subunit. With S5 and S12 plays an important role in translational accuracy. This chain is Small ribosomal subunit protein uS4, found in Picrophilus torridus (strain ATCC 700027 / DSM 9790 / JCM 10055 / NBRC 100828 / KAW 2/3).